Reading from the N-terminus, the 322-residue chain is Replication factor C small subunit (322 aa).

ATP is bound at residue 50–57 (GPAGTGKT).

It belongs to the activator 1 small subunits family. RfcS subfamily. As to quaternary structure, heteromultimer composed of small subunits (RfcS) and large subunits (RfcL).

Part of the RFC clamp loader complex which loads the PCNA sliding clamp onto DNA. This chain is Replication factor C small subunit, found in Halobacterium salinarum (strain ATCC 700922 / JCM 11081 / NRC-1) (Halobacterium halobium).